A 332-amino-acid chain; its full sequence is rRNA biogenesis protein rrp-36 (332 aa).

Disordered stretches follow at residues 1 to 91 (MPAV…ASQL), 104 to 196 (GALK…SGKS), 243 to 262 (SMES…ELLS), and 312 to 332 (KKIA…AEDR). 3 stretches are compositionally biased toward acidic residues: residues 27–45 (EPDS…EEEG), 53–77 (DTEE…DSDA), and 117–127 (EDGSDDDEEKE). Basic and acidic residues-rich tracts occupy residues 128–142 (EPNW…MKAK) and 165–183 (RRRD…RDPR). Residues 212–274 (DYQEDEMKQL…KKKEKELIKQ (63 aa)) are a coiled coil. The segment covering 315-332 (AGKEKKALPLARRTAEDR) has biased composition (basic and acidic residues).

The protein belongs to the RRP36 family. As to quaternary structure, associates with 90S and pre-40S pre-ribosomal particles.

Its subcellular location is the nucleus. The protein localises to the nucleolus. In terms of biological role, component of the 90S pre-ribosome involved in the maturation of rRNAs. Required for early cleavages of the pre-RNAs in the 40S ribosomal subunit maturation pathway. The polypeptide is rRNA biogenesis protein rrp-36 (rrp-36) (Neurospora crassa (strain ATCC 24698 / 74-OR23-1A / CBS 708.71 / DSM 1257 / FGSC 987)).